The sequence spans 353 residues: Dihydroorotate dehydrogenase (quinone) (353 aa).

Residues 67-71 (AGFDK) and threonine 91 each bind FMN. Residue lysine 71 coordinates substrate. 116–120 (NRMGF) contacts substrate. FMN-binding residues include asparagine 144 and asparagine 177. Asparagine 177 lines the substrate pocket. Serine 180 (nucleophile) is an active-site residue. Position 182 (asparagine 182) interacts with substrate. Residues lysine 215 and threonine 243 each coordinate FMN. A substrate-binding site is contributed by 244–245 (NT). Residues glycine 264, glycine 293, and 314-315 (YT) each bind FMN.

It belongs to the dihydroorotate dehydrogenase family. Type 2 subfamily. In terms of assembly, monomer. Requires FMN as cofactor.

Its subcellular location is the cell membrane. It catalyses the reaction (S)-dihydroorotate + a quinone = orotate + a quinol. Its pathway is pyrimidine metabolism; UMP biosynthesis via de novo pathway; orotate from (S)-dihydroorotate (quinone route): step 1/1. Catalyzes the conversion of dihydroorotate to orotate with quinone as electron acceptor. This is Dihydroorotate dehydrogenase (quinone) from Gloeobacter violaceus (strain ATCC 29082 / PCC 7421).